The sequence spans 159 residues: MGGTLAIQAQGDLTLAQKKIVRKTWHQLMRNKTSFVTDVFIRIFAYDPSAQNKFPQMAGMSASQLRSSRQMQAHAIRVSSIMSEYVEELDSDILPELLATLARTHDLNKVGADHYNLFAKVLMEALQAELGSDFNEKTRDAWAKAFSVVQAVLLVKHGN.

An N-acetylglycine modification is found at glycine 2. The Globin domain occupies 12 to 158 (DLTLAQKKIV…VQAVLLVKHG (147 aa)). Residues histidine 74 and histidine 105 each contribute to the heme b site.

It belongs to the globin family. As to quaternary structure, monomer.

The sequence is that of Globin C, coelomic from Molpadia arenicola (Sea cucumber).